The chain runs to 291 residues: Glycine--tRNA ligase alpha subunit (291 aa).

Belongs to the class-II aminoacyl-tRNA synthetase family. In terms of assembly, tetramer of two alpha and two beta subunits.

The protein localises to the cytoplasm. It carries out the reaction tRNA(Gly) + glycine + ATP = glycyl-tRNA(Gly) + AMP + diphosphate. The polypeptide is Glycine--tRNA ligase alpha subunit (Trichlorobacter lovleyi (strain ATCC BAA-1151 / DSM 17278 / SZ) (Geobacter lovleyi)).